Consider the following 367-residue polypeptide: Apolipoprotein A-V (367 aa).

The N-terminal stretch at 1–20 (MAAVITWALALLSVFATVQA) is a signal peptide. Phosphoserine is present on Ser-52. Residues 231-255 (TRKAKDLHTSIQRNLDQLRDELSTF) adopt a coiled-coil conformation. Residues 305–332 (EEIQHQLAPPPPSHSAFAPELGHSDSNK) are disordered.

It belongs to the apolipoprotein A1/A4/E family. In terms of assembly, interacts with GPIHBP1. Interacts with SORL1; this interaction leads to APOA5 internalization and sorting either to lysosomes and degradation, or to the trans-Golgi network. In terms of processing, phosphorylated by FAM20C in the extracellular medium. In terms of tissue distribution, liver.

The protein resides in the secreted. The protein localises to the early endosome. It localises to the late endosome. Its subcellular location is the golgi apparatus. It is found in the trans-Golgi network. In terms of biological role, minor apolipoprotein mainly associated with HDL and to a lesser extent with VLDL. May also be associated with chylomicrons. Important determinant of plasma triglyceride (TG) levels by both being a potent stimulator of apo-CII lipoprotein lipase (LPL) TG hydrolysis and an inhibitor of the hepatic VLDL-TG production rate (without affecting the VLDL-apoB production rate). Activates poorly lecithin:cholesterol acyltransferase (LCAT) and does not enhance efflux of cholesterol from macrophages. Binds heparin. The protein is Apolipoprotein A-V (Apoa5) of Rattus norvegicus (Rat).